Reading from the N-terminus, the 303-residue chain is Aspartate carbamoyltransferase catalytic subunit (303 aa).

The carbamoyl phosphate site is built by R49 and T50. K77 provides a ligand contact to L-aspartate. 3 residues coordinate carbamoyl phosphate: R99, H126, and Q129. Positions 159 and 211 each coordinate L-aspartate. Residues S252 and P253 each contribute to the carbamoyl phosphate site.

The protein belongs to the aspartate/ornithine carbamoyltransferase superfamily. ATCase family. As to quaternary structure, heterododecamer (2C3:3R2) of six catalytic PyrB chains organized as two trimers (C3), and six regulatory PyrI chains organized as three dimers (R2).

It catalyses the reaction carbamoyl phosphate + L-aspartate = N-carbamoyl-L-aspartate + phosphate + H(+). Its pathway is pyrimidine metabolism; UMP biosynthesis via de novo pathway; (S)-dihydroorotate from bicarbonate: step 2/3. In terms of biological role, catalyzes the condensation of carbamoyl phosphate and aspartate to form carbamoyl aspartate and inorganic phosphate, the committed step in the de novo pyrimidine nucleotide biosynthesis pathway. The protein is Aspartate carbamoyltransferase catalytic subunit of Listeria welshimeri serovar 6b (strain ATCC 35897 / DSM 20650 / CCUG 15529 / CIP 8149 / NCTC 11857 / SLCC 5334 / V8).